Reading from the N-terminus, the 425-residue chain is Serine--tRNA ligase (425 aa).

230–232 contacts L-serine; it reads TAE. An ATP-binding site is contributed by 261 to 263; it reads RAE. Glu284 serves as a coordination point for L-serine. Residue 348–351 participates in ATP binding; it reads EISS. Ser384 is a binding site for L-serine.

The protein belongs to the class-II aminoacyl-tRNA synthetase family. Type-1 seryl-tRNA synthetase subfamily. As to quaternary structure, homodimer. The tRNA molecule binds across the dimer.

It is found in the cytoplasm. The enzyme catalyses tRNA(Ser) + L-serine + ATP = L-seryl-tRNA(Ser) + AMP + diphosphate + H(+). It catalyses the reaction tRNA(Sec) + L-serine + ATP = L-seryl-tRNA(Sec) + AMP + diphosphate + H(+). Its pathway is aminoacyl-tRNA biosynthesis; selenocysteinyl-tRNA(Sec) biosynthesis; L-seryl-tRNA(Sec) from L-serine and tRNA(Sec): step 1/1. In terms of biological role, catalyzes the attachment of serine to tRNA(Ser). Is also able to aminoacylate tRNA(Sec) with serine, to form the misacylated tRNA L-seryl-tRNA(Sec), which will be further converted into selenocysteinyl-tRNA(Sec). The protein is Serine--tRNA ligase of Zymomonas mobilis subsp. mobilis (strain ATCC 31821 / ZM4 / CP4).